Reading from the N-terminus, the 199-residue chain is Chaperone protein TorD (199 aa).

It belongs to the TorD/DmsD family. TorD subfamily.

The protein resides in the cytoplasm. In terms of biological role, involved in the biogenesis of TorA. Acts on TorA before the insertion of the molybdenum cofactor and, as a result, probably favors a conformation of the apoenzyme that is competent for acquiring the cofactor. The polypeptide is Chaperone protein TorD (Escherichia coli O6:H1 (strain CFT073 / ATCC 700928 / UPEC)).